Consider the following 120-residue polypeptide: NAD(P)H-quinone oxidoreductase subunit 3, chloroplastic (120 aa).

A run of 3 helical transmembrane segments spans residues 9 to 29 (IFWTFLIIASLIPILAFWISG), 64 to 84 (MFALVFVVFDVETVFLYPWAM), and 88 to 108 (VLGVSVFIEAFIFVLILVVGL).

This sequence belongs to the complex I subunit 3 family. NDH is composed of at least 16 different subunits, 5 of which are encoded in the nucleus.

Its subcellular location is the plastid. The protein resides in the chloroplast thylakoid membrane. It carries out the reaction a plastoquinone + NADH + (n+1) H(+)(in) = a plastoquinol + NAD(+) + n H(+)(out). The enzyme catalyses a plastoquinone + NADPH + (n+1) H(+)(in) = a plastoquinol + NADP(+) + n H(+)(out). Functionally, NDH shuttles electrons from NAD(P)H:plastoquinone, via FMN and iron-sulfur (Fe-S) centers, to quinones in the photosynthetic chain and possibly in a chloroplast respiratory chain. The immediate electron acceptor for the enzyme in this species is believed to be plastoquinone. Couples the redox reaction to proton translocation, and thus conserves the redox energy in a proton gradient. This Lolium perenne (Perennial ryegrass) protein is NAD(P)H-quinone oxidoreductase subunit 3, chloroplastic.